Here is a 236-residue protein sequence, read N- to C-terminus: UPF0257 lipoprotein YnfC (236 aa).

The N-terminal stretch at 1–16 (MKYKLLPCLLAILLTG) is a signal peptide. The N-palmitoyl cysteine moiety is linked to residue cysteine 17. Cysteine 17 carries the S-diacylglycerol cysteine lipid modification.

It belongs to the UPF0257 family.

The protein resides in the cell membrane. In Escherichia coli O81 (strain ED1a), this protein is UPF0257 lipoprotein YnfC.